We begin with the raw amino-acid sequence, 220 residues long: Small ribosomal subunit protein uS3 (220 aa).

One can recognise a KH type-2 domain in the interval 38–106 (IRNFINKKLQ…QVHINIVEIK (69 aa)).

Belongs to the universal ribosomal protein uS3 family. Part of the 30S ribosomal subunit. Forms a tight complex with proteins S10 and S14.

Functionally, binds the lower part of the 30S subunit head. Binds mRNA in the 70S ribosome, positioning it for translation. The polypeptide is Small ribosomal subunit protein uS3 (Lacticaseibacillus paracasei (strain ATCC 334 / BCRC 17002 / CCUG 31169 / CIP 107868 / KCTC 3260 / NRRL B-441) (Lactobacillus paracasei)).